The primary structure comprises 34 residues: Cytochrome b6-f complex subunit 8 (34 aa).

A helical transmembrane segment spans residues 3–23 (IFQIGWAALAAIFTFSIAMVV).

Belongs to the PetN family. In terms of assembly, the 4 large subunits of the cytochrome b6-f complex are cytochrome b6, subunit IV (17 kDa polypeptide, PetD), cytochrome f and the Rieske protein, while the 4 small subunits are PetG, PetL, PetM and PetN. The complex functions as a dimer.

It localises to the cellular thylakoid membrane. In terms of biological role, component of the cytochrome b6-f complex, which mediates electron transfer between photosystem II (PSII) and photosystem I (PSI), cyclic electron flow around PSI, and state transitions. The polypeptide is Cytochrome b6-f complex subunit 8 (Prochlorococcus marinus subsp. pastoris (strain CCMP1986 / NIES-2087 / MED4)).